The chain runs to 163 residues: ATP synthase subunit b (163 aa).

The propeptide occupies Met1–Gly11. The helical transmembrane segment at Gly16–Leu36 threads the bilayer.

The protein belongs to the ATPase B chain family. As to quaternary structure, F-type ATPases have 2 components, F(1) - the catalytic core - and F(0) - the membrane proton channel. F(1) has five subunits: alpha(3), beta(3), gamma(1), delta(1), epsilon(1). F(0) has three main subunits: a(1), b(2) and c(10-14). The alpha and beta chains form an alternating ring which encloses part of the gamma chain. F(1) is attached to F(0) by a central stalk formed by the gamma and epsilon chains, while a peripheral stalk is formed by the delta and b chains.

It is found in the cell membrane. Its function is as follows. F(1)F(0) ATP synthase produces ATP from ADP in the presence of a proton or sodium gradient. F-type ATPases consist of two structural domains, F(1) containing the extramembraneous catalytic core and F(0) containing the membrane proton channel, linked together by a central stalk and a peripheral stalk. During catalysis, ATP synthesis in the catalytic domain of F(1) is coupled via a rotary mechanism of the central stalk subunits to proton translocation. Component of the F(0) channel, it forms part of the peripheral stalk, linking F(1) to F(0). The polypeptide is ATP synthase subunit b (Bacillus sp. (strain PS3)).